Here is a 305-residue protein sequence, read N- to C-terminus: Putative S-adenosyl-L-methionine-dependent methyltransferase MAB_4607c (305 aa).

S-adenosyl-L-methionine is bound by residues Asp128 and 155–156; that span reads DL.

It belongs to the UPF0677 family.

Its function is as follows. Exhibits S-adenosyl-L-methionine-dependent methyltransferase activity. This chain is Putative S-adenosyl-L-methionine-dependent methyltransferase MAB_4607c, found in Mycobacteroides abscessus (strain ATCC 19977 / DSM 44196 / CCUG 20993 / CIP 104536 / JCM 13569 / NCTC 13031 / TMC 1543 / L948) (Mycobacterium abscessus).